The chain runs to 371 residues: 2-aminoethylphosphonate--pyruvate transaminase (371 aa).

Position 195 is an N6-(pyridoxal phosphate)lysine (Lys-195).

This sequence belongs to the class-V pyridoxal-phosphate-dependent aminotransferase family. PhnW subfamily. Homotetramer; however this is for an enzyme with a molecular weight of 16500, which is in disagreement with the weight of this protein. Pyridoxal 5'-phosphate is required as a cofactor.

The catalysed reaction is (2-aminoethyl)phosphonate + pyruvate = phosphonoacetaldehyde + L-alanine. Inhibited by phosphonic acids and very slightly inhibited by aminophosphonic acids. Functionally, involved in phosphonate degradation. The sequence is that of 2-aminoethylphosphonate--pyruvate transaminase (phnW) from Pseudomonas aeruginosa (strain ATCC 15692 / DSM 22644 / CIP 104116 / JCM 14847 / LMG 12228 / 1C / PRS 101 / PAO1).